A 401-amino-acid polypeptide reads, in one-letter code: Dual-specificity RNA methyltransferase RlmN (401 aa).

Catalysis depends on Glu114, which acts as the Proton acceptor. The 246-residue stretch at 120 to 365 (DKTRGTLCVS…TMVRRTRGDD (246 aa)) folds into the Radical SAM core domain. An intrachain disulfide couples Cys127 to Cys370. The [4Fe-4S] cluster site is built by Cys134, Cys138, and Cys141. S-adenosyl-L-methionine-binding positions include 187–188 (GE), Ser219, 241–243 (SLH), and Asn327. Cys370 functions as the S-methylcysteine intermediate in the catalytic mechanism.

Belongs to the radical SAM superfamily. RlmN family. [4Fe-4S] cluster is required as a cofactor.

It localises to the cytoplasm. It catalyses the reaction adenosine(2503) in 23S rRNA + 2 reduced [2Fe-2S]-[ferredoxin] + 2 S-adenosyl-L-methionine = 2-methyladenosine(2503) in 23S rRNA + 5'-deoxyadenosine + L-methionine + 2 oxidized [2Fe-2S]-[ferredoxin] + S-adenosyl-L-homocysteine. The enzyme catalyses adenosine(37) in tRNA + 2 reduced [2Fe-2S]-[ferredoxin] + 2 S-adenosyl-L-methionine = 2-methyladenosine(37) in tRNA + 5'-deoxyadenosine + L-methionine + 2 oxidized [2Fe-2S]-[ferredoxin] + S-adenosyl-L-homocysteine. Specifically methylates position 2 of adenine 2503 in 23S rRNA and position 2 of adenine 37 in tRNAs. m2A2503 modification seems to play a crucial role in the proofreading step occurring at the peptidyl transferase center and thus would serve to optimize ribosomal fidelity. The polypeptide is Dual-specificity RNA methyltransferase RlmN (Stenotrophomonas maltophilia (strain K279a)).